Here is a 177-residue protein sequence, read N- to C-terminus: Ribosome maturation factor RimM (177 aa).

A PRC barrel domain is found at 98–177 (GEEFYWRELY…RIEVDWDPGF (80 aa)).

The protein belongs to the RimM family. In terms of assembly, binds ribosomal protein uS19.

The protein resides in the cytoplasm. Its function is as follows. An accessory protein needed during the final step in the assembly of 30S ribosomal subunit, possibly for assembly of the head region. Essential for efficient processing of 16S rRNA. May be needed both before and after RbfA during the maturation of 16S rRNA. It has affinity for free ribosomal 30S subunits but not for 70S ribosomes. The polypeptide is Ribosome maturation factor RimM (Photobacterium profundum (strain SS9)).